The primary structure comprises 418 residues: Tyrosine--tRNA ligase (418 aa).

Tyrosine 34 provides a ligand contact to L-tyrosine. The 'HIGH' region motif lies at 39–48 (PTGDSMHIGH). L-tyrosine is bound by residues tyrosine 166 and glutamine 170. Residues 228–232 (KFGKT) carry the 'KMSKS' region motif. Lysine 231 is a binding site for ATP. One can recognise an S4 RNA-binding domain in the interval 350-418 (QNIVLWLVDA…KKRYFLAHVK (69 aa)).

The protein belongs to the class-I aminoacyl-tRNA synthetase family. TyrS type 1 subfamily. Homodimer.

The protein localises to the cytoplasm. It carries out the reaction tRNA(Tyr) + L-tyrosine + ATP = L-tyrosyl-tRNA(Tyr) + AMP + diphosphate + H(+). In terms of biological role, catalyzes the attachment of tyrosine to tRNA(Tyr) in a two-step reaction: tyrosine is first activated by ATP to form Tyr-AMP and then transferred to the acceptor end of tRNA(Tyr). This Lactiplantibacillus plantarum (strain ATCC BAA-793 / NCIMB 8826 / WCFS1) (Lactobacillus plantarum) protein is Tyrosine--tRNA ligase.